A 490-amino-acid polypeptide reads, in one-letter code: Cytochrome P450 2C38 (490 aa).

Positions 1-20 (MDLVTFLVLTLSSLILLSLW) are cleaved as a signal peptide. Cysteine 435 contacts heme.

It belongs to the cytochrome P450 family. It depends on heme as a cofactor. As to expression, liver, brain, kidney, and intestine, with trace amounts in lung and heart.

It is found in the endoplasmic reticulum membrane. The protein localises to the microsome membrane. The catalysed reaction is an organic molecule + reduced [NADPH--hemoprotein reductase] + O2 = an alcohol + oxidized [NADPH--hemoprotein reductase] + H2O + H(+). It catalyses the reaction (5Z,8Z,11Z,14Z)-eicosatetraenoate + reduced [NADPH--hemoprotein reductase] + O2 = 11,12-epoxy-(5Z,8Z,14Z)-eicosatrienoate + oxidized [NADPH--hemoprotein reductase] + H2O + H(+). It participates in lipid metabolism; arachidonate metabolism. Functionally, a cytochrome P450 monooxygenase that primarily catalyzes the epoxidation of 11,12 double bond of (5Z,8Z,11Z,14Z)-eicosatetraenoic acid (arachidonate) forming 11,12-epoxyeicosatrienoic acid (11,12-EET) regioisomer. Mechanistically, uses molecular oxygen inserting one oxygen atom into a substrate, and reducing the second into a water molecule, with two electrons provided by NADPH via cytochrome P450 reductase (CPR; NADPH--hemoprotein reductase). This chain is Cytochrome P450 2C38, found in Mus musculus (Mouse).